A 397-amino-acid chain; its full sequence is MKEKVVLAYSGGLDTSIIIPWLKENYDLDVIAVCVNVGQGDDMDYVKTKAIKSGASKIYVEDVKEEFVVDYLYKAIKSEALYEQDYMLGTSFARPLMAKKLVEIAHKEQAKYICHGCTGKGNDQVRFEVGVKAQDPTIKIIAPWRIWDIKSREDAIDYAKKVGVEVPVTKKKIYSVDKNLWHVSHEGGDLEDLKNEHKEDMYFMVTPPEKAKDEPTYLEIYFEKGAPVKINGEVLNPVDIIDKLNTIGGENGIGIADIIENRLVGMKSRGIYETPAGTLLYAAHKKLESVTLDKYTYQYKKIVSAQYGELVYNGLWFTSLREAIDAFVDKTQENVTGTVQLKLYKGNIKPCSVDTEYALYDEGISSFGESELYSHKDAEGFINLFGLPSKIKALKNF.

Residue 8-16 (AYSGGLDTS) participates in ATP binding. L-citrulline contacts are provided by tyrosine 86 and serine 91. Position 116 (glycine 116) interacts with ATP. L-aspartate contacts are provided by threonine 118, asparagine 122, and aspartate 123. Asparagine 122 lines the L-citrulline pocket. L-citrulline-binding residues include arginine 126, serine 175, serine 184, glutamate 260, and tyrosine 272.

This sequence belongs to the argininosuccinate synthase family. Type 1 subfamily. Homotetramer.

The protein localises to the cytoplasm. It carries out the reaction L-citrulline + L-aspartate + ATP = 2-(N(omega)-L-arginino)succinate + AMP + diphosphate + H(+). Its pathway is amino-acid biosynthesis; L-arginine biosynthesis; L-arginine from L-ornithine and carbamoyl phosphate: step 2/3. The protein is Argininosuccinate synthase of Clostridium botulinum (strain ATCC 19397 / Type A).